The chain runs to 208 residues: Platelet-activating factor receptor (208 aa).

Residues 1–16 (MEPHDSSHVDSEFRYT) are Extracellular-facing. A helical transmembrane segment spans residues 17-38 (LFPIVYSIIFVLGVIANGYVLW). At 39–54 (VFARLYPSKKFNEIKI) the chain is on the cytoplasmic side. Residues 55–74 (FMVNLTMADMLFLITLPLWI) form a helical membrane-spanning segment. Residues 75–91 (VYYQNGGNWIFPKFLCN) lie on the Extracellular side of the membrane. Cys90 and Cys173 are joined by a disulfide. A helical membrane pass occupies residues 92–113 (LAGCLFFINTYCSVAFLGVITY). Over 114-133 (NRFQAVTRPIKTAQANTRKR) the chain is Cytoplasmic. Residues 134 to 155 (GISLSLVIWVAIVGAASYFFIL) traverse the membrane as a helical segment. At 156-184 (DSTNTVPNSAGSGNITRCFEHYEKGSVPV) the chain is on the extracellular side. N-linked (GlcNAc...) asparagine glycosylation is present at Asn169. A helical membrane pass occupies residues 185 to 205 (LIIHIFIVFSFFLVFLIILFC). Residues 206–208 (NLV) lie on the Cytoplasmic side of the membrane.

This sequence belongs to the G-protein coupled receptor 1 family. As to quaternary structure, interacts with ARRB1.

It localises to the cell membrane. Its function is as follows. Receptor for platelet activating factor, a chemotactic phospholipid mediator that possesses potent inflammatory, smooth-muscle contractile and hypotensive activity. Seems to mediate its action via a G protein that activates a phosphatidylinositol-calcium second messenger system. The protein is Platelet-activating factor receptor (PTAFR) of Macaca mulatta (Rhesus macaque).